The sequence spans 132 residues: Small ribosomal subunit protein uS8 (132 aa).

The protein belongs to the universal ribosomal protein uS8 family. Part of the 30S ribosomal subunit. Contacts proteins S5 and S12.

Its function is as follows. One of the primary rRNA binding proteins, it binds directly to 16S rRNA central domain where it helps coordinate assembly of the platform of the 30S subunit. This Streptococcus uberis (strain ATCC BAA-854 / 0140J) protein is Small ribosomal subunit protein uS8.